Reading from the N-terminus, the 204-residue chain is Large ribosomal subunit protein bL25 (204 aa).

Belongs to the bacterial ribosomal protein bL25 family. CTC subfamily. In terms of assembly, part of the 50S ribosomal subunit; part of the 5S rRNA/L5/L18/L25 subcomplex. Contacts the 5S rRNA. Binds to the 5S rRNA independently of L5 and L18.

In terms of biological role, this is one of the proteins that binds to the 5S RNA in the ribosome where it forms part of the central protuberance. This is Large ribosomal subunit protein bL25 from Burkholderia mallei (strain NCTC 10247).